Here is a 266-residue protein sequence, read N- to C-terminus: Outer membrane protein OmpK (266 aa).

The N-terminal stretch at 1-20 is a signal peptide; that stretch reads MRKSLLALSLLAATSAPVLA.

The protein belongs to the nucleoside-specific channel-forming outer membrane porin (Tsx) (TC 1.B.10) family.

It is found in the cell outer membrane. Its function is as follows. Serves as receptor for a broad-host-range vibriophage, KVP40. The sequence is that of Outer membrane protein OmpK (ompK) from Vibrio parahaemolyticus serotype O3:K6 (strain RIMD 2210633).